Consider the following 510-residue polypeptide: NAD(P)H-quinone oxidoreductase subunit 2 B, chloroplastic (510 aa).

A run of 12 helical transmembrane segments spans residues 24 to 44 (LLLFHGSFIFPECILIFGLIL), 57 to 77 (IPWLYFISSTSLVMSITALLF), 99 to 119 (IFQFLILLCSTLCIPLSVEYI), 124 to 144 (MAITEFLLFVLTATLGGMFLC), 183 to 203 (YLLMGGASSSILVHGFSWLYG), 227 to 247 (PGISIALISITVGIGFKLSPA), 295 to 315 (WHLLLEILAILSMILGNLIAI), 323 to 343 (MLAYSSIGQIGYVIIGIIVGD), 347 to 367 (GYASMITYMLFYISMNLGTFA), 395 to 415 (ALSSALCLLSLGGLPPLAGFF), 418 to 438 (LHLFWCGWQAGLYFLVSIGLL), and 484 to 504 (MIVCVIASTIPGISMNPIIAI).

This sequence belongs to the complex I subunit 2 family. NDH is composed of at least 16 different subunits, 5 of which are encoded in the nucleus.

Its subcellular location is the plastid. It localises to the chloroplast thylakoid membrane. The catalysed reaction is a plastoquinone + NADH + (n+1) H(+)(in) = a plastoquinol + NAD(+) + n H(+)(out). It catalyses the reaction a plastoquinone + NADPH + (n+1) H(+)(in) = a plastoquinol + NADP(+) + n H(+)(out). NDH shuttles electrons from NAD(P)H:plastoquinone, via FMN and iron-sulfur (Fe-S) centers, to quinones in the photosynthetic chain and possibly in a chloroplast respiratory chain. The immediate electron acceptor for the enzyme in this species is believed to be plastoquinone. Couples the redox reaction to proton translocation, and thus conserves the redox energy in a proton gradient. The sequence is that of NAD(P)H-quinone oxidoreductase subunit 2 B, chloroplastic from Calycanthus floridus var. glaucus (Eastern sweetshrub).